A 182-amino-acid polypeptide reads, in one-letter code: UPF0397 protein llmg_0343 (182 aa).

Transmembrane regions (helical) follow at residues 8–28 (IVVA…LINI), 42–62 (AVLA…IGFI), 74–94 (APWW…GFGV), 114–134 (IVQF…GDIL), and 146–166 (QGVV…TLLL).

The protein belongs to the UPF0397 family.

It is found in the cell membrane. The polypeptide is UPF0397 protein llmg_0343 (Lactococcus lactis subsp. cremoris (strain MG1363)).